Reading from the N-terminus, the 93-residue chain is Cobalt transport protein CbiN (93 aa).

The next 2 helical transmembrane spans lie at 5–25 (LMLL…NHGG) and 63–83 (LLFT…LGYC).

It belongs to the CbiN family. As to quaternary structure, forms an energy-coupling factor (ECF) transporter complex composed of an ATP-binding protein (A component, CbiO), a transmembrane protein (T component, CbiQ) and 2 possible substrate-capture proteins (S components, CbiM and CbiN) of unknown stoichimetry.

It localises to the cell inner membrane. It participates in cofactor biosynthesis; adenosylcobalamin biosynthesis. Part of the energy-coupling factor (ECF) transporter complex CbiMNOQ involved in cobalt import. This chain is Cobalt transport protein CbiN, found in Salmonella paratyphi B (strain ATCC BAA-1250 / SPB7).